We begin with the raw amino-acid sequence, 534 residues long: Lariat debranching enzyme A (534 aa).

4 residues coordinate a divalent metal cation: C8, H10, D39, and N84. The lariat recognition loop stretch occupies residues S124–R154. A divalent metal cation-binding residues include H174, H226, and H228. Disordered stretches follow at residues E386–E439 and S469–E534. Positions E388–A400 are enriched in acidic residues. The span at S413–N424 shows a compositional bias: polar residues. Over residues I428–E439 the composition is skewed to acidic residues. A compositionally biased stretch (basic and acidic residues) spans E484–Q499.

This sequence belongs to the lariat debranching enzyme family. The cofactor is Fe(2+). Zn(2+) serves as cofactor. Requires Mn(2+) as cofactor.

It localises to the nucleus. Active in presence of diverse metals including Fe(2+), Zn(2+), Mn(2+). Also activated by Ca(2+). Binds two metal cations in two adjacent alpha and beta metal-binding pockets. In terms of biological role, cleaves the 2'-5' phosphodiester linkage at the branch point of excised lariat intron RNA and converts them into linear molecules that can be subsequently degraded, thereby facilitating ribonucleotide turnover. Linked to its role in pre-mRNA processing mechanism, may also participate in retrovirus replication and have an antiviral cell-intrinsic defense function. This is Lariat debranching enzyme A (dbr1-a) from Xenopus laevis (African clawed frog).